A 355-amino-acid polypeptide reads, in one-letter code: G protein alpha i subunit (355 aa).

A lipid anchor (N-myristoyl glycine) is attached at Gly-2. Cys-3 carries the S-palmitoyl cysteine lipid modification. Positions 33 to 355 constitute a G-alpha domain; that stretch reads SEVKLLLLGA…KNNLKQIGLF (323 aa). The segment at 36–49 is G1 motif; sequence KLLLLGAGESGKST. GTP is bound by residues 41–48, 176–182, 201–205, 270–273, and Ala-327; these read GAGESGKS, LRTRVKT, DVGGQ, and NKKD. The Mg(2+) site is built by Ser-48 and Thr-182. Residues 174–182 form a G2 motif region; sequence DVLRTRVKT. The segment at 197-206 is G3 motif; the sequence is FKLFDVGGQR. The interval 266–273 is G4 motif; sequence ILFLNKKD. The tract at residues 325-330 is G5 motif; the sequence is TCATDT.

It belongs to the G-alpha family. G(i/o/t/z) subfamily. In terms of assembly, g proteins are composed of 3 units; alpha, beta and gamma. The alpha chain contains the guanine nucleotide binding site. Interacts (via GDP- or GTP-bound forms) with loco (via GoLoco and RGS domains). Interacts with raps/pins.

It localises to the cell membrane. The protein resides in the apical cell membrane. In terms of biological role, guanine nucleotide-binding proteins (G proteins) are involved as modulators or transducers in various transmembrane signaling systems. Plays a role in glial cell differentiation during embryogenesis; loco, Galphao and the G-protein coupled receptor, moody, are required in the surface glia to achieve effective insulation of the nerve cord. This is G protein alpha i subunit (Galphai) from Drosophila melanogaster (Fruit fly).